The chain runs to 143 residues: Cold shock domain-containing protein CG9705 (143 aa).

Residues Met1 to Gln30 form a disordered region. Phosphoserine is present on residues Ser22, Ser24, Ser28, and Ser33. Positions Val54 to Ser121 constitute a CSD domain. A phosphoserine mark is found at Ser139 and Ser140.

In Drosophila melanogaster (Fruit fly), this protein is Cold shock domain-containing protein CG9705.